A 2699-amino-acid chain; its full sequence is MNPLFPFSLLNPSTMWSSSQNTSFVWVVIATGFLFHLVLFVLSYVLGWPFTNFGFFSVYGLRHTFRNGDSVFISYVALRLHRPSTSKPYLLRIVTKGLIYTPSLSSANDAQSAGKNENQRSRLVFKAKREEEKTEEKFCHAVYMSNLLRNVEQKWIQFLHKSWMKWLHISIQESQLTFPSVGTFELGSLSMEMRPETNNVVGYENPSDPELVSSCVICSIRLANLVYIDRRQSSQQITDYLDLSLQTYYSLDKSNVPDTILRLRSSIKVGVLYIDLDTPLFEHLLNSNSSGGNHSSSSSSSGKVHVMKDNVEAALLKLQEAQIQIGTLKLWKRNVTGCGATYILNGSDFGLNLILLNKKNPSHRMFFPVEACVHQILASALSFNVESITPGHSPHVLLNIPLVTITCLTSALAEYARDASDLHQLQNSILRVNSTLTSPSLDLRLELLHDVLSCFPKKHDSTSRKKPKFPYQYFPYMKFSVSLYEPALRFLIASKSDSDFPGMLVANLSSMFLDIKYSPSSEHIFEIESSLRLSSNKVFYHNPKNKKWLINTSDLITFSLGYICNNDHGSLNMFFRDFQIRIEEEEVINSLKKFIILTKIKSEQVGPRKPRTKLVEPLLFRIPKWLKHIQLEVHSLLLVITAIRPEISPEPRGINCSIDKIHSLYLNDKKSRSQGMRKFDLNLELLMIKSIIFKNGKSLNSHLFLQIPNINFIVSTILRDNTAISRFTTEINFLRCFASLLHNCCIFYAYRACSSLFGENKSHKRIEKTNTSPQEPGVVPEGWNFDFRLKNARVSIFLDDDVSLLLDCGGFTTLKKTEKKYAEMHAKFIQIHTKNSDVPTLWDRFLALGNVRYQLKDLSDLEKLHQVTCSYISIRIPHKFIPFILIESAINTVKAAIRVSAEPLTIDQQHDLAEEIKQPRVVPHIQIKSTKFKFEVDDDPFECRLGMNYRIGLTEQQMRIDRWNIFEERANLLRKAKDPSPKSASESSSFYQNGSDIDDNDSNSSNTSNHTTENANAQQRKLEDLNRSFEDFLGSRPTNNSSFLKNVSVDEDTAREKLMEYDSLSWISNIKRIREFRYHRLRIRRMTAWPESDALDKHILFKENIIPIPIRPPLVDISLLNFDFTLDKPSFPLEELPKFLNTVGRGQPLDYGYSIYFPMYIDWKMDEAKFLIRDYPLPLVYIPKLGRGQDKRISSWHLKSNMVITEQQATLAAIRDVSVKVIPADLTKEGIPYVVNVTRTVSPIKTFSKTEIDVNSSLPTFLLWCNSYQPALSDMTRIMDTFTKMPIDPSEKLGFWDKIRLVAHSQIRLRWLEDGDVFLSLKGSRDPYVILGEGAGFQFCWSGNVSWDIGCDENPANFMIVDSDKFYLTIPDFPRQINGILEGKPLPTKSTKRSYTTFGVLKDLRCRKVIAKLVGKVRWRAGFVPERHCDEDCTVCNRKKACRLWNFKPHWQVITRIPQYCHDTHYGVYDAYRDFRSHYIHCSLALESPRYLDDANAFENVNSYNTIHLTPLVFSHFSSWWNLFSNNMSYPLRSGNLFPTLDSSPNKKFGRHLATFKYALELTPLFISHMYNYKTNKNWQDRTASATGLKARVDNFTIDLHQRSEKHEVKNKANLGRKHQEATSMKVHLAEIDFKTIDLRAISASFDEGALDNSDSIPANVLDEEEKECFSFKNVDGPANWVDIDDYHEADWLLPQQNEKCSIYPLAFSPRFTYYRHTKCHRRNEKNEKEIIPDTCRFGDEFTHRCLMPSRENPKAVQYELLQKRRKELEEFMSSEQERIGFLKSQLESNNDSEEVRQEYEELTKRIVTLSDHYRLLEYLLKDESSCSQASQCSENGQVDLSYASLSESVHAFNNRFVAHNVQVKWNNFIRNAVMSYVHEVERVRGFAYYMSQKAIVFLRDLEKRTESANDDFFGNYTEDDEDRENARHLLKFLLEDSKKRFWVKTSDADREHGSEEGNTNSISNNEYDIIQSYVFRFISPQIQLQCSSNPEKAVIISIQSLQIKILSVVDPIFPDNDINYLIERRFLCKVNESQFFISKKSDFEVVNASSLVLNEYGCEHNTVWPPWVPFETTFDFVLTPAAFSRFLHRVSFSVIYTKHNDLRLQETVHSTRAFFEDLDTHADTLTFDFPRVVFSTDSSQYYDIFTIITDLLLYKEPAQKQRNQRLEEIMLAADFSDLTGTSEVVRALQARVHRLLDLKLQHQLYDVTFGIYAHIAQQLFLQNELHRCGEELYYLIESIAAVQNRGIHQNKVRSNLSWFLMAKEVVWHLLEDNKKPFLDVRLQNATFRRIENSDASNFNTLEIEFMKGSNLAPGCQFENIICPYFNHEFSNEQLLQQKFIRIHWEVLEAVAGIQVIQHFEINLFPLSLQIEQELATKLFAYAFPNRNESDGFPHIYSRNHDKRKENGSQGEADNSNYSGSLMRRRTNDQEEDALATPSSSRRDSRSKRASLIDFTIDKCLDVDDEGRMELQSMLDRAGSNMLITYFKIPSVVLRLSYRGTGGLGLENITGFVFTVPTMEYRNEVCSYLDLAMKLKHDLIRTVVSHTGKLLVEKVKGNYHLKEHEREVSSELLNLQQLSAEHNRHADLESMVMARDDYINVQQPLAEENQEEGSPASAISRNHSTRSSLNSPRQFWAYHGSRSKKIADIVKRHIPPTINGKRSKNKGNEGSNARVDFYNDERYDPVKRELILGASNRRK.

Residue Asn-21 is glycosylated (N-linked (GlcNAc...) asparagine). A helical membrane pass occupies residues 24 to 44 (FVWVVIATGFLFHLVLFVLSY). 14 N-linked (GlcNAc...) asparagine glycosylation sites follow: Asn-288, Asn-293, Asn-334, Asn-345, Asn-433, Asn-507, Asn-551, Asn-655, Asn-760, Asn-993, Asn-1000, Asn-1003, Asn-1006, and Asn-1009. Residues 975-1021 (KAKDPSPKSASESSSFYQNGSDIDDNDSNSSNTSNHTTENANAQQRK) form a disordered region. A compositionally biased stretch (low complexity) spans 981–995 (PKSASESSSFYQNGS). Residues 1006–1033 (NTSNHTTENANAQQRKLEDLNRSFEDFL) are a coiled coil. The span at 1010-1019 (HTTENANAQQ) shows a compositional bias: polar residues. Residues Asn-1026, Asn-1039, Asn-1046, Asn-1236, Asn-1255, Asn-1344, Asn-1527, Asn-1595, Asn-1791, Asn-1916, Asn-2032, Asn-2048, Asn-2256, Asn-2285, Asn-2388, Asn-2407, Asn-2417, Asn-2508, and Asn-2622 are each glycosylated (N-linked (GlcNAc...) asparagine). Positions 1758-1818 (QYELLQKRRK…TLSDHYRLLE (61 aa)) form a coiled coil. A disordered region spans residues 2393-2447 (FPHIYSRNHDKRKENGSQGEADNSNYSGSLMRRRTNDQEEDALATPSSSRRDSRS). The segment covering 2408 to 2420 (GSQGEADNSNYSG) has biased composition (polar residues). Disordered stretches follow at residues 2606–2632 (AEEN…LNSP) and 2647–2676 (ADIV…ARVD). Residues 2617–2632 (SAISRNHSTRSSLNSP) are compositionally biased toward polar residues.

The protein belongs to the UPF0648 family.

It localises to the membrane. This is UPF0648 protein C3H5.09c from Schizosaccharomyces pombe (strain 972 / ATCC 24843) (Fission yeast).